The following is an 88-amino-acid chain: Small ribosomal subunit protein bS20 (88 aa).

Residues 1–25 (MANSAQARKRARQAVAQNAHNSSLR) form a disordered region.

This sequence belongs to the bacterial ribosomal protein bS20 family.

Binds directly to 16S ribosomal RNA. The chain is Small ribosomal subunit protein bS20 from Cupriavidus pinatubonensis (strain JMP 134 / LMG 1197) (Cupriavidus necator (strain JMP 134)).